We begin with the raw amino-acid sequence, 243 residues long: Uridylate kinase (243 aa).

Position 18 to 21 (18 to 21) interacts with ATP; sequence KLGG. Gly59 provides a ligand contact to UMP. Residues Gly60 and Arg64 each coordinate ATP. UMP contacts are provided by residues Asp79 and 140-147; that span reads MGMPYFST. 2 residues coordinate ATP: Tyr173 and Asp176.

The protein belongs to the UMP kinase family. As to quaternary structure, homohexamer.

The protein resides in the cytoplasm. The enzyme catalyses UMP + ATP = UDP + ADP. It functions in the pathway pyrimidine metabolism; CTP biosynthesis via de novo pathway; UDP from UMP (UMPK route): step 1/1. Inhibited by UTP. Its function is as follows. Catalyzes the reversible phosphorylation of UMP to UDP. This Corynebacterium efficiens (strain DSM 44549 / YS-314 / AJ 12310 / JCM 11189 / NBRC 100395) protein is Uridylate kinase.